Reading from the N-terminus, the 506-residue chain is Dual specificity protein kinase shkC (506 aa).

The disordered stretch occupies residues 1–21; it reads MDSGLGSSYPEERSGPPEIRP. The segment covering 10 to 21 has biased composition (basic and acidic residues); that stretch reads PEERSGPPEIRP. Residues 24–284 form the Protein kinase domain; that stretch reads INFEELIGTG…IISALDHVII (261 aa). Residues 30 to 38 and Lys51 each bind ATP; that span reads IGTGSFGKV. Asp147 acts as the Proton acceptor in catalysis. Positions 396–488 constitute an SH2 domain; that stretch reads WFHGDLDTTE…KLDSQLGVPN (93 aa).

It belongs to the protein kinase superfamily. TKL Ser/Thr protein kinase family. SH2 domain-containing protein kinase subfamily.

It localises to the membrane. The catalysed reaction is L-seryl-[protein] + ATP = O-phospho-L-seryl-[protein] + ADP + H(+). It carries out the reaction L-threonyl-[protein] + ATP = O-phospho-L-threonyl-[protein] + ADP + H(+). Its function is as follows. Required for proper chemotaxis and phagocytosis; proper spatiotemporal control of F-actin levels in chemotaxing cells. Negative regulator of the PI3K (phosphatidylinositol 3 kinase) pathway. Predominantly phosphorylates serines and threonines and tyrosines at a lower level. The chain is Dual specificity protein kinase shkC (shkC) from Dictyostelium discoideum (Social amoeba).